The chain runs to 957 residues: Glycine dehydrogenase (decarboxylating) 2 (957 aa).

An N6-(pyridoxal phosphate)lysine modification is found at Lys707.

This sequence belongs to the GcvP family. The glycine cleavage system is composed of four proteins: P, T, L and H. Pyridoxal 5'-phosphate serves as cofactor.

The enzyme catalyses N(6)-[(R)-lipoyl]-L-lysyl-[glycine-cleavage complex H protein] + glycine + H(+) = N(6)-[(R)-S(8)-aminomethyldihydrolipoyl]-L-lysyl-[glycine-cleavage complex H protein] + CO2. In terms of biological role, the glycine cleavage system catalyzes the degradation of glycine. The P protein binds the alpha-amino group of glycine through its pyridoxal phosphate cofactor; CO(2) is released and the remaining methylamine moiety is then transferred to the lipoamide cofactor of the H protein. The polypeptide is Glycine dehydrogenase (decarboxylating) 2 (Pseudomonas fluorescens (strain Pf0-1)).